A 1385-amino-acid chain; its full sequence is Formin-like protein 7 (1385 aa).

A Phosphatase tensin-type domain is found at 9–193 (FKKPPDGLLL…RYVSMRNVVP (185 aa)). The active-site Phosphocysteine intermediate is the Cys-126. Residues 199–358 (DRALTLDSVI…KASSTSQGNI (160 aa)) form the C2 tensin-type domain. 4 disordered regions span residues 345 to 367 (IPQR…DGSE), 427 to 510 (APSR…LTVN), 649 to 989 (STAA…PLHW), and 1362 to 1385 (KRAQ…LLEP). Polar residues-rich tracts occupy residues 349–358 (KASSTSQGNI), 448–470 (TSAS…SPVQ), and 483–510 (PAQS…LTVN). Composition is skewed to pro residues over residues 654–665 (PPLPPPLPPPLK) and 689–701 (TQPP…PPIQ). The span at 702–718 (PTLISNSIYSSTSSVVS) shows a compositional bias: low complexity. Pro residues-rich tracts occupy residues 727–758 (PAPP…PPSA), 766–795 (PVPP…PPAA), and 802–815 (AVPP…PPMV). A compositionally biased stretch (low complexity) spans 855–867 (QTSSLVSSLPSSR). Pro residues-rich tracts occupy residues 895 to 906 (SAPPAPPLPPPK) and 921 to 932 (WPPPPPPGPPPK). Positions 933-942 (NSSNSLPSKG) are enriched in low complexity. The FH2 domain maps to 974–1372 (RPNQSSKRTP…RAQMEAEKEK (399 aa)).

Belongs to the formin-like family. Class-II subfamily.

This chain is Formin-like protein 7 (FH7), found in Oryza sativa subsp. japonica (Rice).